Here is a 397-residue protein sequence, read N- to C-terminus: MVVLTICGGGNAAHTLAGIASNQPNMEVRVLTLYADEAERWIKSMETNDFTTIKYATGKDPVHLKTKPKLVTKNPEQGATGADIIVITVPAFAHAQYLTALKPHVKPGTVVVGFPGQPGFDFEIMKIWGDLAKQCTVMNFVSLPWACRIKEFGKSVEVLATKDMMFGSVRNGTVAPKMDPTAMIQGCLGPLPRLECSGHLLGMSIMAVNGMLHPSIMYNRWHDWDGKPVDAPPLFYHGLSQAGADLLSDVSNETIAIAKKVMEQRQGVDLSNVIHMHPYYIGAYPDDISDKSSLYTCINTNAGFKGLTHPCTKTADGKFVPDFTGRYFGEDIPFGLAVTRGIAEIAGCPTPNIDKIIEWAQKLMGKEYLVGGKFTGKDISATRAPQRYGFNTLDSIL.

This sequence belongs to the lysopine/nopaline/octopine/opine/vitopine dehydrogenases family.

The catalysed reaction is tauropine + NAD(+) + H2O = taurine + pyruvate + NADH + H(+). Subject to substrate inhibition by pyruvate for the reverse reaction but not for the forward reaction of the tauropine dehydrogenase activity. In terms of biological role, may play a role in maintaining a redox balance during environmental and functional hypoxia. Exhibits high specificity for taurine and in addition, requires both alpha amino group and C-2 carbon chain length as a critical factor for active site binding of the amino acid. A methyl group in the beta position may be critical for active site binding of the keto acid. In the reverse reaction requires NAD(H) for the activity but not NADP(H). The chain is Tauropine dehydrogenase from Arabella iricolor (Opal worm).